The chain runs to 500 residues: MKFKVINEKISNLMVDILIIGIYEEVKSLGDVHHTMDQQLGGLIQEMINAEEFKGEEGETLLVHTLGRVPAKKCILLGLGKAEAFKENNLRNVVAKVMREARKSRAETIAITPFGICNHISAEKVGQAIAEGTKLGLYQFNHYKTTAKEQEERVLQEVYILNEETGITAQLQTGIDTGEKLAHATMIARDLVNEPGNVLTPTEMAKRAQSISQKHGLELEILEKEDMERLGMGCFLGVTAGSEEPPKLMVLKYNGGEEGGEILGLVGKGLTFDSGGISIKPGEGMDAMKGDMGGAAAVLGAMEAIGALKPKTNVIAVVGACENMPSGKAYKPGDILTSKGGKTVEILNTDAEGRLVLVDCVSYALQLGATRLVDLATLTGACLIALGTTTTALISNDELWVKQIEDASKNAGEQVWQLPSFPEYKEMIKSEIADLKNIGGKYAGAITAGLFVGEFAEGKPWVHMDIAGTSMSDKEKGYITKGGTGVAVRTLYELAKSMEK.

Lys268 and Asp273 together coordinate Mn(2+). Residue Lys280 is part of the active site. Mn(2+) is bound by residues Asp291, Asp350, and Glu352. Residue Arg354 is part of the active site.

The protein belongs to the peptidase M17 family. It depends on Mn(2+) as a cofactor.

The protein localises to the cytoplasm. The catalysed reaction is Release of an N-terminal amino acid, Xaa-|-Yaa-, in which Xaa is preferably Leu, but may be other amino acids including Pro although not Arg or Lys, and Yaa may be Pro. Amino acid amides and methyl esters are also readily hydrolyzed, but rates on arylamides are exceedingly low.. It catalyses the reaction Release of an N-terminal amino acid, preferentially leucine, but not glutamic or aspartic acids.. In terms of biological role, presumably involved in the processing and regular turnover of intracellular proteins. Catalyzes the removal of unsubstituted N-terminal amino acids from various peptides. This is Probable cytosol aminopeptidase from Alkaliphilus metalliredigens (strain QYMF).